A 201-amino-acid polypeptide reads, in one-letter code: Probable nicotinate-nucleotide adenylyltransferase (201 aa).

It belongs to the NadD family.

The catalysed reaction is nicotinate beta-D-ribonucleotide + ATP + H(+) = deamido-NAD(+) + diphosphate. It participates in cofactor biosynthesis; NAD(+) biosynthesis; deamido-NAD(+) from nicotinate D-ribonucleotide: step 1/1. Functionally, catalyzes the reversible adenylation of nicotinate mononucleotide (NaMN) to nicotinic acid adenine dinucleotide (NaAD). The polypeptide is Probable nicotinate-nucleotide adenylyltransferase (Clostridium botulinum (strain Loch Maree / Type A3)).